Here is a 703-residue protein sequence, read N- to C-terminus: Probable ATP-dependent RNA helicase vasa-like (703 aa).

Disordered regions lie at residues 1–22 (MSDD…ESFG), 35–73 (NTGN…GRGG), and 88–167 (RDCP…RGCF). A compositionally biased stretch (gly residues) spans 61–73 (SGGGGFGGRGRGG). Residues 77 to 92 (CFKCGDEGHMARDCPS) form a CCHC-type 1 zinc finger. Positions 146 to 155 (FGFGSGSGSR) are enriched in gly residues. CCHC-type zinc fingers lie at residues 166 to 181 (CFKC…DCPS) and 189 to 204 (CFKC…DCPN). The Q motif signature appears at 261–289 (ESFQSMNLRPLLLENIVKAGYGCPTPVQK). Residues 292–475 (IPNVMNGRDI…SAFLNNYLFV (184 aa)) enclose the Helicase ATP-binding domain. ATP is bound at residue 305-312 (AQTGSGKT). The DEAD box motif lies at 419–422 (DEAD). In terms of domain architecture, Helicase C-terminal spans 506-651 (MCEEILISAD…TIPDWLTQKA (146 aa)). The tract at residues 676–703 (GGGRGWEKNQASSFLGGPSESNVDEEWD) is disordered.

Belongs to the DEAD box helicase family. DDX4/VASA subfamily. In terms of tissue distribution, expressed in ovaries and testis. Not expressed in somatic tissue of the ovaries including follicle cells, muscle and connective tissue.

It is found in the cytoplasm. Its subcellular location is the nucleus. It localises to the nucleolus. It carries out the reaction ATP + H2O = ADP + phosphate + H(+). In terms of biological role, involved in translational control mechanisms operating in early stages of oogenesis. Required maternally in many stages of oogenesis, including cystocyte differentiation, oocyte differentiation, and specification of anterior-posterior polarity in the developing cysts. Essential for the formation and/or structural integrity of perinuclear nuage particles during germ cell formation. The polypeptide is Probable ATP-dependent RNA helicase vasa-like (Penaeus vannamei (Whiteleg shrimp)).